The primary structure comprises 1088 residues: RNA-directed RNA polymerase (1088 aa).

The RdRp catalytic domain occupies 501–687 (LSYGDVTRFL…AKRYIAGGKI (187 aa)).

This sequence belongs to the reoviridae RNA-directed RNA polymerase family. Interacts with VP3 (Potential). Interacts with VP2; this interaction activates VP1. Interacts with NSP5; this interaction is probably necessary for the formation of functional virus factories. Interacts with NSP2; this interaction is weak. Requires Mg(2+) as cofactor.

Its subcellular location is the virion. It catalyses the reaction RNA(n) + a ribonucleoside 5'-triphosphate = RNA(n+1) + diphosphate. Its function is as follows. RNA-directed RNA polymerase that is involved in both transcription and genome replication. Together with VP3 capping enzyme, forms an enzyme complex positioned near the channels situated at each of the five-fold vertices of the core. Following infection, the outermost layer of the virus is lost, leaving a double-layered particle (DLP) made up of the core and VP6 shell. VP1 then catalyzes the transcription of fully conservative plus-strand genomic RNAs that are extruded through the DLP's channels into the cytoplasm where they function as mRNAs for translation of viral proteins. One copy of each of the viral (+)RNAs is also recruited during core assembly, together with newly synthesized polymerase complexes and VP2. The polymerase of these novo-formed particles catalyzes the synthesis of complementary minus-strands leading to dsRNA formation. To do so, the polymerase specifically recognizes and binds 4 bases 5'-UGUG-3' in the conserved 3'-sequence of plus-strand RNA templates. VP2 presumably activates the autoinhibited VP1-RNA complex to coordinate packaging and genome replication. Once dsRNA synthesis is complete, the polymerase switches to the transcriptional mode, thus providing secondary transcription. The polypeptide is RNA-directed RNA polymerase (Homo sapiens (Human)).